Reading from the N-terminus, the 284-residue chain is Acetylglutamate kinase (284 aa).

Residues Gly-64 to Gly-65, Arg-86, and Asn-179 contribute to the substrate site.

It belongs to the acetylglutamate kinase family. ArgB subfamily.

It is found in the cytoplasm. The catalysed reaction is N-acetyl-L-glutamate + ATP = N-acetyl-L-glutamyl 5-phosphate + ADP. It functions in the pathway amino-acid biosynthesis; L-arginine biosynthesis; N(2)-acetyl-L-ornithine from L-glutamate: step 2/4. Catalyzes the ATP-dependent phosphorylation of N-acetyl-L-glutamate. This chain is Acetylglutamate kinase, found in Acaryochloris marina (strain MBIC 11017).